The following is a 303-amino-acid chain: Glutathione transport system permease protein GsiD (303 aa).

The next 6 helical transmembrane spans lie at 40–60 (AMTA…ARWI), 105–125 (LAAG…LGLL), 144–164 (LFAF…GSGI), 165–185 (ANVI…LVRG), 222–242 (IVVF…SLSF), and 266–286 (VIAP…VLAF). The 190-residue stretch at 101–290 (AQISLAAGVF…LTVLAFNLLG (190 aa)) folds into the ABC transmembrane type-1 domain.

The protein belongs to the binding-protein-dependent transport system permease family. In terms of assembly, the complex is composed of two ATP-binding proteins (GsiA), two transmembrane proteins (GsiC and GsiD) and a solute-binding protein (GsiB).

Its subcellular location is the cell inner membrane. Part of the ABC transporter complex GsiABCD involved in glutathione import. Probably responsible for the translocation of the substrate across the membrane. The chain is Glutathione transport system permease protein GsiD from Shigella dysenteriae serotype 1 (strain Sd197).